Here is an 84-residue protein sequence, read N- to C-terminus: Small ribosomal subunit protein bS18 (84 aa).

It belongs to the bacterial ribosomal protein bS18 family. In terms of assembly, part of the 30S ribosomal subunit. Forms a tight heterodimer with protein bS6.

Its function is as follows. Binds as a heterodimer with protein bS6 to the central domain of the 16S rRNA, where it helps stabilize the platform of the 30S subunit. In Methylorubrum extorquens (strain CM4 / NCIMB 13688) (Methylobacterium extorquens), this protein is Small ribosomal subunit protein bS18.